We begin with the raw amino-acid sequence, 2135 residues long: Nonribosomal peptide synthetase gliP (2135 aa).

The segment at 34-424 is adenylation 1; it reads TYTELDVASS…LPADVEEPLR (391 aa). The Carrier 1 domain maps to 519–594; it reads TEREQVIAEC…GILPYARDLA (76 aa). An O-(pantetheine 4'-phosphoryl)serine modification is found at S555. The interval 663-913 is condensation 1; that stretch reads AEHICNAWRQ…MATLPLVCRI (251 aa). Positions 1078 to 1458 are adenylation 2; the sequence is YRELDQKSNA…YQEEPRLTQA (381 aa). Residues 1544-1622 enclose the Carrier 2 domain; that stretch reads ASIADGIATL…EQVELVRRKR (79 aa). S1582 is modified (O-(pantetheine 4'-phosphoryl)serine). A condensation 2 region spans residues 1642–1905; that stretch reads SPLERQTWFQ…FLDRLPLRFK (264 aa). Residues 2061–2134 enclose the Carrier 3 domain; it reads RRLVGILQRE…DLAQRLYRQV (74 aa). At S2095 the chain carries O-(pantetheine 4'-phosphoryl)serine.

This sequence belongs to the NRP synthetase family.

Its pathway is mycotoxin biosynthesis. Nonribosomal peptide synthetase; part of the gene cluster that mediates the biosynthesis of gliotoxin, a member of the epipolythiodioxopiperazine (ETP) class of toxins characterized by a disulfide-bridged cyclic dipeptide. The first step in gliotoxin biosynthesis is the condensation of serine and phenylalanine to form the cyclo-L-phenylalanyl-L-serine diketopiperazine (DKP) by the NRPS gliP. GliP is also able to produce the DKP cyclo-L-tryptophanyl-L-serine, suggesting that the substrate specificity of the first adenylation (A) domain in gliP is sufficiently relaxed to accommodate both L-Phe and L-Trp. The cytochrome P450 monooxygenase gliC has been shown to catalyze the subsequent hydroxylation of the alpha-carbon of L-Phe in cyclo-L-phenylalanyl-L-serine whereas the second cytochrome P450 enzyme, gliF, is presumably involved in the modification of the DKP side chain. The glutathione S-transferase (GST) gliG then forms a bis-glutathionylated biosynthetic intermediate which is responsible for the sulfurization of gliotoxin. This bis-glutathionylated intermediate is subsequently processed by the gamma-glutamyl cyclotransferase gliK to remove both gamma-glutamyl moieties. Subsequent processing via gliI yields a biosynthetic intermediate, which is N-methylated via the N-methyltransferase gliN, before the gliotoxin oxidoreductase gliT-mediated disulfide bridge closure. GliN-mediated amide methylation confers stability to ETP, damping the spontaneous formation of tri- and tetrasulfides. Intracellular dithiol gliotoxin oxidized by gliT is subsequently effluxed by gliA. Gliotoxin contributes to pathogenesis during invasive aspergillosis. In macrophages and neutrophils, gliotoxin showed inhibition of various different cell functions including cytokine production, antigen presentation, phagocytosis, and production of reactive oxygen species. This is Nonribosomal peptide synthetase gliP from Aspergillus fumigatus (strain ATCC MYA-4609 / CBS 101355 / FGSC A1100 / Af293) (Neosartorya fumigata).